A 302-amino-acid polypeptide reads, in one-letter code: Glutaminase (302 aa).

Residues Ser-61, Asn-111, Glu-155, Asn-162, Tyr-186, Tyr-238, and Val-256 each contribute to the substrate site.

Belongs to the glutaminase family. Homotetramer.

It carries out the reaction L-glutamine + H2O = L-glutamate + NH4(+). In Pseudomonas aeruginosa (strain LESB58), this protein is Glutaminase.